A 32-amino-acid polypeptide reads, in one-letter code: Unknown protein from spot 206 of 2D-PAGE of etiolated coleoptile (32 aa).

The chain is Unknown protein from spot 206 of 2D-PAGE of etiolated coleoptile from Zea mays (Maize).